We begin with the raw amino-acid sequence, 775 residues long: 5-methyltetrahydropteroyltriglutamate--homocysteine methyltransferase (775 aa).

5-methyltetrahydropteroyltri-L-glutamate-binding positions include 16 to 19 (REMK) and Lys115. Residues 435–437 (IGS) and Glu488 contribute to the L-homocysteine site. L-methionine-binding positions include 435–437 (IGS) and Glu488. 5-methyltetrahydropteroyltri-L-glutamate contacts are provided by residues 519 to 520 (RC) and Trp565. Asp603 lines the L-homocysteine pocket. Asp603 serves as a coordination point for L-methionine. Glu609 is a 5-methyltetrahydropteroyltri-L-glutamate binding site. His645, Cys647, and Glu669 together coordinate Zn(2+). Catalysis depends on His698, which acts as the Proton donor. Cys730 contributes to the Zn(2+) binding site.

Belongs to the vitamin-B12 independent methionine synthase family. Requires Zn(2+) as cofactor.

The enzyme catalyses 5-methyltetrahydropteroyltri-L-glutamate + L-homocysteine = tetrahydropteroyltri-L-glutamate + L-methionine. Its pathway is amino-acid biosynthesis; L-methionine biosynthesis via de novo pathway; L-methionine from L-homocysteine (MetE route): step 1/1. Its function is as follows. Catalyzes the transfer of a methyl group from 5-methyltetrahydrofolate to homocysteine resulting in methionine formation. This is 5-methyltetrahydropteroyltriglutamate--homocysteine methyltransferase from Coxiella burnetii (strain Dugway 5J108-111).